The chain runs to 236 residues: Probable metal transport system ATP-binding protein CT_416 (236 aa).

Residues 5-236 (MLLENVSFRY…FCCNTFGRCP (232 aa)) form the ABC transporter domain. Position 39–46 (39–46 (GPNGGGKT)) interacts with ATP.

The protein belongs to the ABC transporter superfamily.

It localises to the cell inner membrane. Its function is as follows. Part of an ATP-driven transport system CT_415/CT_416/CT_417 for a metal. Probably responsible for energy coupling to the transport system. The sequence is that of Probable metal transport system ATP-binding protein CT_416 from Chlamydia trachomatis serovar D (strain ATCC VR-885 / DSM 19411 / UW-3/Cx).